A 351-amino-acid polypeptide reads, in one-letter code: Probable aldo-keto reductase 2 (351 aa).

Tyr-67 functions as the Proton donor in the catalytic mechanism. His-134 provides a ligand contact to substrate. Residue Ser-213 to Gly-223 coordinates NADP(+). A disordered region spans residues Tyr-317 to Gln-351. Over residues Met-332 to Gln-351 the composition is skewed to polar residues.

It belongs to the aldo/keto reductase family.

In Oryza sativa subsp. japonica (Rice), this protein is Probable aldo-keto reductase 2.